Consider the following 334-residue polypeptide: Transposase for insertion sequence element IS1328 (334 aa).

It belongs to the transposase IS1111A/IS1328/IS1533 family.

Its function is as follows. Required for the transposition of the insertion element. This chain is Transposase for insertion sequence element IS1328, found in Yersinia enterocolitica.